A 181-amino-acid polypeptide reads, in one-letter code: 3-hydroxyanthranilate 3,4-dioxygenase (181 aa).

Arginine 46 is a binding site for O2. Histidine 50, glutamate 56, and histidine 95 together coordinate Fe cation. Glutamate 56 serves as a coordination point for substrate. Residues arginine 99 and glutamate 109 each contribute to the substrate site.

The protein belongs to the 3-HAO family. Fe(2+) serves as cofactor.

Its subcellular location is the cytoplasm. It carries out the reaction 3-hydroxyanthranilate + O2 = (2Z,4Z)-2-amino-3-carboxymuconate 6-semialdehyde. It functions in the pathway cofactor biosynthesis; NAD(+) biosynthesis; quinolinate from L-kynurenine: step 3/3. Functionally, catalyzes the oxidative ring opening of 3-hydroxyanthranilate to 2-amino-3-carboxymuconate semialdehyde, which spontaneously cyclizes to quinolinate. This Mycosarcoma maydis (Corn smut fungus) protein is 3-hydroxyanthranilate 3,4-dioxygenase.